The following is a 641-amino-acid chain: MRLLEPIKVGKIELKNRVMFPPMTTGYEGRDGTIVEQSFNFYKRLAEGGVSYIVLGDVAPVNTISPTPKLFHDGQIEAFRKLADAVHEFDCKLGIQIFHPEYDVEALAELFRKGDMEGGRAKMRHDMVHFIQEVTEEQLNSILDKIGECVKRAQSAGVDIIEVHGDRLIGSFCSTLINRRTDSYGGSFENRIRFALRVVDKIREVAPDICIDYKLPVVTENPLRGKGGLMINEAVEFAKILERSGVDMIHVGQANHTGNMNDTIPAMGTQPYCFMSKYTKQIKEAVSIPVSSVGRIVTPENAEALIENGVCDIVGLGRSLLADPDYVKKLEAGEGRRIRHCMMCNKGCTDAIQNRKFLSCVLNAENGYEYERTITPSDEKKKVVVIGGGVAGMEAARVASVKGHEVVLFEKETTLGGQLNIASVPPRKSEMNRALRYLTNEMKELHVDLRLGRTADAEMILAENPDNVIVAAGAHNVIPPIEGSKMPHVFDAWKVLNHEELPSGRVVVIGGGLVGAETAELLAEMGCQVSVVEMMEEIAKEESKTVRPVLFESFEKYQVQLLTGTKVTAITANSVEAENAEGKVSLPCDYVVLAVGARPNLFDVQALEDKGVQVSFVGDCNERAADINRAVEEGYLAANVL.

Residue Gln-96 participates in FMN binding. Arg-167 serves as the catalytic Proton donor. FMN contacts are provided by residues Lys-214, Arg-295, and 317 to 318; that span reads GR. Cys-341, Cys-344, Cys-348, and Cys-360 together coordinate [4Fe-4S] cluster. The FAD site is built by Ala-391, Glu-410, Gln-418, Lys-428, and Ala-455.

The protein in the N-terminal section; belongs to the NADH:flavin oxidoreductase/NADH oxidase family. It depends on FAD as a cofactor. FMN is required as a cofactor. Requires [4Fe-4S] cluster as cofactor.

The enzyme catalyses urobilinogen + 4 A = (4Z,15Z)-bilirubin IXalpha + 4 AH2. It carries out the reaction urobilinogen + 2 A = (4Z,15Z)-mesobilirubin IXalpha + 2 AH2. It functions in the pathway porphyrin-containing compound metabolism; protoheme degradation. Functionally, bilirubin reductase that catalyzes reduction of mesobilirubin and/or bilirubin to urobilinogen, a key step during heme degradation. Urobilinogen then spontaneously degrades into urobilin, which gives urine its distinctive yellow color. In Mediterraneibacter gnavus (strain CC55_001C), this protein is Bilirubin reductase.